Here is a 719-residue protein sequence, read N- to C-terminus: Aminodeoxychorismate synthase (719 aa).

The Glutamine amidotransferase type-1 domain occupies 5–199; that stretch reads RTLLIDNYDS…RDLSLRAAGH (195 aa). Cysteine 86 functions as the Nucleophile in the catalytic mechanism. Residues histidine 173 and glutamate 175 contribute to the active site. Residues 199 to 224 are disordered; the sequence is HRPPHTERIPAPAPAPAPAPAPAPPA. Over residues 209–224 the composition is skewed to pro residues; the sequence is APAPAPAPAPAPAPPA.

The protein in the C-terminal section; belongs to the anthranilate synthase component I family.

The enzyme catalyses chorismate + L-glutamine = 4-amino-4-deoxychorismate + L-glutamate. Its pathway is antibiotic biosynthesis. Involved in pristinamycin I biosynthesis. Catalyzes the biosynthesis of 4-amino-4-deoxychorismate (ADC) from chorismate and glutamine. This chain is Aminodeoxychorismate synthase, found in Streptomyces pristinaespiralis.